Reading from the N-terminus, the 274-residue chain is tRNA-cytidine(32) 2-sulfurtransferase (274 aa).

The PP-loop motif signature appears at 40–45 (SGGKDS). [4Fe-4S] cluster-binding residues include C115, C118, and C206.

The protein belongs to the TtcA family. As to quaternary structure, homodimer. Mg(2+) is required as a cofactor. It depends on [4Fe-4S] cluster as a cofactor.

The protein resides in the cytoplasm. It catalyses the reaction cytidine(32) in tRNA + S-sulfanyl-L-cysteinyl-[cysteine desulfurase] + AH2 + ATP = 2-thiocytidine(32) in tRNA + L-cysteinyl-[cysteine desulfurase] + A + AMP + diphosphate + H(+). It functions in the pathway tRNA modification. Its function is as follows. Catalyzes the ATP-dependent 2-thiolation of cytidine in position 32 of tRNA, to form 2-thiocytidine (s(2)C32). The sulfur atoms are provided by the cysteine/cysteine desulfurase (IscS) system. This chain is tRNA-cytidine(32) 2-sulfurtransferase, found in Pseudomonas entomophila (strain L48).